The following is a 113-amino-acid chain: Pancreatic progenitor cell differentiation and proliferation factor (113 aa).

This sequence belongs to the PPDPF family.

In terms of biological role, probable regulator of exocrine pancreas development. The sequence is that of Pancreatic progenitor cell differentiation and proliferation factor (ppdpf) from Xenopus tropicalis (Western clawed frog).